The primary structure comprises 484 residues: MPSPSPEASSSMSQPGPPSRSPSPASSNPDAPEASHNKTFADLGISPELCRACASMGFKKPSDIQAEAIPHALEGKDIIGLAQTGSGKTAAFSLPILQTLWENPQPFFALVLAPTRELAYQISQQVTSLGSGIGVRTAVLVGGMDMMSQSIALSKRPHIIVATPGRLMDHLENTKGFSLKSLKYLVMDEADRLLDLDFGPIIDKILKVIPKERNTYLFSATMTTKVAKLQRASLNKPVRVEVSSKYSTVSTLLQHYLLLPLKNKDAYLLYLANELSSSSMMIFTRTVADSQRLSIILRRLGFPAIPLHGQMTQSLRLASLNKFKSGGRSILVATDVASRGLDIPLVDLVINYDMPTNSKDYVHRVGRTARAGRSGKSITLVTQYDVEILQRIESHIGKKMTSFDVDKEAVALLTDTVAKANREAALEMRESGTGGGGGKRGRDKGKRKTFGDGDDRDRDDDVVEAGVPRKKNKFTPGGKKKARK.

Low complexity-rich tracts occupy residues 1-14 (MPSP…SMSQ) and 22-34 (PSPA…APEA). The disordered stretch occupies residues 1–38 (MPSPSPEASSSMSQPGPPSRSPSPASSNPDAPEASHNK). The short motif at 38 to 66 (KTFADLGISPELCRACASMGFKKPSDIQA) is the Q motif element. The Helicase ATP-binding domain maps to 69-240 (IPHALEGKDI…RASLNKPVRV (172 aa)). ATP is bound at residue 82–89 (AQTGSGKT). A DEAD box motif is present at residues 188 to 191 (DEAD). A Helicase C-terminal domain is found at 263-411 (NKDAYLLYLA…SFDVDKEAVA (149 aa)). The segment at 425–484 (ALEMRESGTGGGGGKRGRDKGKRKTFGDGDDRDRDDDVVEAGVPRKKNKFTPGGKKKARK) is disordered. 2 stretches are compositionally biased toward basic residues: residues 439 to 448 (KRGRDKGKRK) and 468 to 484 (PRKK…KARK).

Belongs to the DEAD box helicase family. DDX47/RRP3 subfamily. As to quaternary structure, interacts with the SSU processome.

Its subcellular location is the nucleus. It catalyses the reaction ATP + H2O = ADP + phosphate + H(+). ATP-dependent rRNA helicase required for pre-ribosomal RNA processing. Involved in the maturation of the 35S-pre-rRNA and to its cleavage to mature 18S rRNA. In Cryptococcus neoformans var. neoformans serotype D (strain B-3501A) (Filobasidiella neoformans), this protein is ATP-dependent rRNA helicase RRP3.